The sequence spans 122 residues: Small ribosomal subunit protein uS13 (122 aa).

A disordered region spans residues 97–122 (PVRGQRTKTNARTRKGPARTVAGKKK).

Belongs to the universal ribosomal protein uS13 family. Part of the 30S ribosomal subunit. Forms a loose heterodimer with protein S19. Forms two bridges to the 50S subunit in the 70S ribosome.

Its function is as follows. Located at the top of the head of the 30S subunit, it contacts several helices of the 16S rRNA. In the 70S ribosome it contacts the 23S rRNA (bridge B1a) and protein L5 of the 50S subunit (bridge B1b), connecting the 2 subunits; these bridges are implicated in subunit movement. Contacts the tRNAs in the A and P-sites. This Geobacter metallireducens (strain ATCC 53774 / DSM 7210 / GS-15) protein is Small ribosomal subunit protein uS13.